Consider the following 699-residue polypeptide: uncharacterized protein (699 aa).

3 disordered regions span residues 175–208, 289–364, and 539–603; these read PTLG…ASLS, PTAK…EEPD, and RAKE…KEYL. Over residues 183–194 the composition is skewed to basic and acidic residues; sequence PSKHGDHSDSKT. Residues 195–208 are compositionally biased toward polar residues; sequence YESPISNSQAASLS. Residues 308 to 322 show a composition bias toward basic residues; that stretch reads SKHKKRPKRLSKFKQ. Residues 323 to 338 are compositionally biased toward basic and acidic residues; the sequence is AKLETKKSGNKDHATS. Polar residues-rich tracts occupy residues 339–360 and 548–573; these read SEKL…SSSI and HSNA…NTKL. A compositionally biased stretch (basic and acidic residues) spans 574–603; that stretch reads NPKEEDKSTVESELKAPPKEKSSETSKEYL.

The protein localises to the cytoplasm. This is an uncharacterized protein from Schizosaccharomyces pombe (strain 972 / ATCC 24843) (Fission yeast).